A 711-amino-acid chain; its full sequence is Polyribonucleotide nucleotidyltransferase (711 aa).

Mg(2+) is bound by residues aspartate 486 and aspartate 492. Positions 553–612 (PRIHTIKINPDKIKDVIGKGGSVIRALTEETGTTIEIEDDGTVKIAATDGDKAQHAIRRI) constitute a KH domain. The region spanning 622–690 (GRIYNGKVTR…RQGRVRLSIK (69 aa)) is the S1 motif domain. Residues 689-711 (IKEATEQTPSAAAPEAPAAEQGE) form a disordered region. Residues 694-711 (EQTPSAAAPEAPAAEQGE) show a composition bias toward low complexity.

Belongs to the polyribonucleotide nucleotidyltransferase family. As to quaternary structure, component of the RNA degradosome, which is a multiprotein complex involved in RNA processing and mRNA degradation. It depends on Mg(2+) as a cofactor.

Its subcellular location is the cytoplasm. The catalysed reaction is RNA(n+1) + phosphate = RNA(n) + a ribonucleoside 5'-diphosphate. In terms of biological role, involved in mRNA degradation. Catalyzes the phosphorolysis of single-stranded polyribonucleotides processively in the 3'- to 5'-direction. The protein is Polyribonucleotide nucleotidyltransferase of Klebsiella pneumoniae subsp. pneumoniae (strain ATCC 700721 / MGH 78578).